We begin with the raw amino-acid sequence, 461 residues long: Glycine--tRNA ligase (461 aa).

Arg-100 and Glu-174 together coordinate substrate. ATP contacts are provided by residues 206-208 (RNE), 216-221 (FRTREF), 290-291 (EL), and 334-337 (GVDR). 221–225 (FEQME) is a binding site for substrate. 330–334 (EPSVG) contacts substrate.

The protein belongs to the class-II aminoacyl-tRNA synthetase family. As to quaternary structure, homodimer.

It is found in the cytoplasm. It catalyses the reaction tRNA(Gly) + glycine + ATP = glycyl-tRNA(Gly) + AMP + diphosphate. Functionally, catalyzes the attachment of glycine to tRNA(Gly). This chain is Glycine--tRNA ligase, found in Caldanaerobacter subterraneus subsp. tengcongensis (strain DSM 15242 / JCM 11007 / NBRC 100824 / MB4) (Thermoanaerobacter tengcongensis).